We begin with the raw amino-acid sequence, 602 residues long: Elongation factor 4 (602 aa).

A tr-type G domain is found at 7-188 (ENIRNFSIIA…AIIELIPPPK (182 aa)). GTP-binding positions include 19–24 (DHGKST) and 135–138 (NKID).

It belongs to the TRAFAC class translation factor GTPase superfamily. Classic translation factor GTPase family. LepA subfamily.

The protein localises to the cell inner membrane. It carries out the reaction GTP + H2O = GDP + phosphate + H(+). Its function is as follows. Required for accurate and efficient protein synthesis under certain stress conditions. May act as a fidelity factor of the translation reaction, by catalyzing a one-codon backward translocation of tRNAs on improperly translocated ribosomes. Back-translocation proceeds from a post-translocation (POST) complex to a pre-translocation (PRE) complex, thus giving elongation factor G a second chance to translocate the tRNAs correctly. Binds to ribosomes in a GTP-dependent manner. The protein is Elongation factor 4 of Chlamydia caviae (strain ATCC VR-813 / DSM 19441 / 03DC25 / GPIC) (Chlamydophila caviae).